The following is a 194-amino-acid chain: dTTP/UTP pyrophosphatase (194 aa).

D66 acts as the Proton acceptor in catalysis.

The protein belongs to the Maf family. YhdE subfamily. The cofactor is a divalent metal cation.

The protein localises to the cytoplasm. It catalyses the reaction dTTP + H2O = dTMP + diphosphate + H(+). The enzyme catalyses UTP + H2O = UMP + diphosphate + H(+). Its function is as follows. Nucleoside triphosphate pyrophosphatase that hydrolyzes dTTP and UTP. May have a dual role in cell division arrest and in preventing the incorporation of modified nucleotides into cellular nucleic acids. This chain is dTTP/UTP pyrophosphatase, found in Anaeromyxobacter dehalogenans (strain 2CP-C).